The chain runs to 229 residues: Ribonuclease T (229 aa).

Residues 23 to 197 form the Exonuclease domain; it reads VIIDVETAGF…YDTERTAKLF (175 aa). Mg(2+)-binding residues include D26, E28, H184, and D189. Catalysis depends on H184, which acts as the Proton donor/acceptor.

Belongs to the RNase T family. As to quaternary structure, homodimer. Mg(2+) is required as a cofactor.

In terms of biological role, trims short 3' overhangs of a variety of RNA species, leaving a one or two nucleotide 3' overhang. Responsible for the end-turnover of tRNA: specifically removes the terminal AMP residue from uncharged tRNA (tRNA-C-C-A). Also appears to be involved in tRNA biosynthesis. The chain is Ribonuclease T from Haemophilus influenzae (strain ATCC 51907 / DSM 11121 / KW20 / Rd).